The primary structure comprises 257 residues: Phycoerythrobilin:ferredoxin oxidoreductase (257 aa).

It belongs to the HY2 family.

The enzyme catalyses (3Z)-phycoerythrobilin + oxidized 2[4Fe-4S]-[ferredoxin] = 15,16-dihydrobiliverdin + reduced 2[4Fe-4S]-[ferredoxin] + 2 H(+). Catalyzes the two-electron reduction of the C2 and C3(1) diene system of 15,16-dihydrobiliverdin. The protein is Phycoerythrobilin:ferredoxin oxidoreductase (pebB) of Prochlorococcus marinus (strain SARG / CCMP1375 / SS120).